The following is a 385-amino-acid chain: Acetate kinase (385 aa).

N9 is a Mg(2+) binding site. An ATP-binding site is contributed by K16. R87 is a substrate binding site. D144 (proton donor/acceptor) is an active-site residue. ATP-binding positions include 202–206 (HLGSG) and 277–279 (DMR). E373 contacts Mg(2+).

This sequence belongs to the acetokinase family. In terms of assembly, homodimer. Mg(2+) serves as cofactor. It depends on Mn(2+) as a cofactor.

The protein resides in the cytoplasm. The enzyme catalyses acetate + ATP = acetyl phosphate + ADP. The protein operates within metabolic intermediate biosynthesis; acetyl-CoA biosynthesis; acetyl-CoA from acetate: step 1/2. Its function is as follows. Catalyzes the formation of acetyl phosphate from acetate and ATP. Can also catalyze the reverse reaction. The chain is Acetate kinase from Rickettsia typhi (strain ATCC VR-144 / Wilmington).